Here is a 205-residue protein sequence, read N- to C-terminus: Small ribosomal subunit protein uS4 (205 aa).

In terms of domain architecture, S4 RNA-binding spans 94-172 (SRLDSIVYRM…TTPDYVSFDV (79 aa)).

This sequence belongs to the universal ribosomal protein uS4 family. In terms of assembly, part of the 30S ribosomal subunit. Contacts protein S5. The interaction surface between S4 and S5 is involved in control of translational fidelity.

One of the primary rRNA binding proteins, it binds directly to 16S rRNA where it nucleates assembly of the body of the 30S subunit. Its function is as follows. With S5 and S12 plays an important role in translational accuracy. The polypeptide is Small ribosomal subunit protein uS4 (Rickettsia bellii (strain OSU 85-389)).